The following is a 267-amino-acid chain: Very long chain fatty acid elongase 6 (267 aa).

A glycan (N-linked (GlcNAc...) asparagine) is linked at Asn-2. Transmembrane regions (helical) follow at residues 34–51, 70–90, 111–131, 136–156, 159–179, 197–217, and 234–254; these read FLFS…RHLM, LAVF…YILM, FWAY…IFII, KLIF…WYSY, MVAG…VMYS, FITL…YLVF, and IFWS…FFFE.

This sequence belongs to the ELO family. ELOVL6 subfamily. In terms of processing, N-Glycosylated. As to expression, expressed in liver and barely in brain.

It localises to the endoplasmic reticulum membrane. The enzyme catalyses a very-long-chain acyl-CoA + malonyl-CoA + H(+) = a very-long-chain 3-oxoacyl-CoA + CO2 + CoA. It catalyses the reaction hexadecanoyl-CoA + malonyl-CoA + H(+) = 3-oxooctadecanoyl-CoA + CO2 + CoA. It carries out the reaction (9Z)-hexadecenoyl-CoA + malonyl-CoA + H(+) = 3-oxo-(11Z)-octadecenoyl-CoA + CO2 + CoA. The catalysed reaction is dodecanoyl-CoA + malonyl-CoA + H(+) = 3-oxotetradecanoyl-CoA + CO2 + CoA. The enzyme catalyses tetradecanoyl-CoA + malonyl-CoA + H(+) = 3-oxohexadecanoyl-CoA + CO2 + CoA. It catalyses the reaction (9Z)-octadecenoyl-CoA + malonyl-CoA + H(+) = 3-oxo-(11Z)-eicosenoyl-CoA + CO2 + CoA. It carries out the reaction (9Z,12Z)-octadecadienoyl-CoA + malonyl-CoA + H(+) = (11Z,14Z)-3-oxoicosa-11,14-dienoyl-CoA + CO2 + CoA. The catalysed reaction is (9Z,12Z,15Z)-octadecatrienoyl-CoA + malonyl-CoA + H(+) = (11Z,14Z,17Z)-3-oxoeicosatrienoyl-CoA + CO2 + CoA. Its pathway is lipid metabolism; fatty acid biosynthesis. The reaction is stimulated by the presence of HSD17B12, the enzyme catalyzing the second step of the elongation cycle. Catalyzes the first and rate-limiting reaction of the four reactions that constitute the long-chain fatty acids elongation cycle. This endoplasmic reticulum-bound enzymatic process allows the addition of 2 carbons to the chain of long- and very long-chain fatty acids (VLCFAs) per cycle. Condensing enzyme that elongates fatty acids with 12, 14 and 16 carbons with higher activity toward C16:0 acyl-CoAs. Catalyzes the synthesis of unsaturated C16 long chain fatty acids and, to a lesser extent, C18:0 and those with low desaturation degree. May participate in the production of saturated and monounsaturated VLCFAs of different chain lengths that are involved in multiple biological processes as precursors of membrane lipids and lipid mediators. This Rattus norvegicus (Rat) protein is Very long chain fatty acid elongase 6.